Reading from the N-terminus, the 508-residue chain is MTEPTQPQAAVAADENQIVAERRDKLRALRDQGIAYPNDFQPTHHAAGLQTEYADADKEALDAKALDVAVAGRMMLKRVMGKASFATVQDGSGQIQFFVTPADVGAETYDAFKKWDLGDIVAARGVLFRTNKGELSVKCTELRLLAKALRPLPDKFHGLADQETRYRQRYVDLIVTPETRATFRARTKAIASIRKFMSDADFMEVETPMLHPIPGGAAAKPFVTHHNALDMQMFLRIAPELYLKRLIVGGFERVFEINRNFRNEGVSPRHNPEFTMMEFYAAYTDYRWLMDFTERLIRQAAVDALGTATIRYQGRELDLAKPFRRLTITQAIQKYAPNYTDGQLSDDAFLRGELKRLGVDVTQPAFLNAGIGALQLALFEETAEAQLWEPTFIIDYPIEVSPLARESDTVAGITERFELFVTGREIANGFSELNDPEDQAARFRKQVEQKDAGDEEAMFFDADYIRALEYGMPPTGGCGIGIDRLVMLLTDSPTIRDVLLFPHLRRED.

Mg(2+) contacts are provided by E418 and E425.

Belongs to the class-II aminoacyl-tRNA synthetase family. As to quaternary structure, homodimer. It depends on Mg(2+) as a cofactor.

It is found in the cytoplasm. The catalysed reaction is tRNA(Lys) + L-lysine + ATP = L-lysyl-tRNA(Lys) + AMP + diphosphate. In Burkholderia pseudomallei (strain 1710b), this protein is Lysine--tRNA ligase.